The primary structure comprises 63 residues: uncharacterized protein (63 aa).

The next 2 helical transmembrane spans lie at 3–23 (VFLI…VYYI) and 42–62 (ALVC…TKLL).

The protein localises to the cell membrane. This is an uncharacterized protein from Bacillus subtilis (strain 168).